A 130-amino-acid polypeptide reads, in one-letter code: UPF0102 protein TDE_2303 (130 aa).

Belongs to the UPF0102 family.

This is UPF0102 protein TDE_2303 from Treponema denticola (strain ATCC 35405 / DSM 14222 / CIP 103919 / JCM 8153 / KCTC 15104).